A 30-amino-acid chain; its full sequence is Matrix Gla protein (30 aa).

Serine 2, serine 3, and serine 5 each carry phosphoserine.

It belongs to the osteocalcin/matrix Gla protein family. In terms of processing, requires vitamin K-dependent gamma-carboxylation for its function.

It is found in the secreted. Functionally, associates with the organic matrix of calcified cartilage. The polypeptide is Matrix Gla protein (mgp) (Prionace glauca (Blue shark)).